Consider the following 405-residue polypeptide: Envelope glycoprotein M (405 aa).

Topologically, residues 1–17 are intravirion; the sequence is MKSSKNDTFVYRTWVKT. Residues 18 to 38 form a helical membrane-spanning segment; sequence LVVYFVMFVMSAVVPITAMFP. The Virion surface segment spans residues 39-76; the sequence is NLGYPCYFNALVDYGALNLTNYNLAHHLTPTLYLEPPE. Residues 77–97 form a helical membrane-spanning segment; it reads MFVYITLVFIADCVAFIYYAC. At 98-121 the chain is on the intravirion side; sequence GEVALIKARKKVSGLTDLSAWVSA. A helical membrane pass occupies residues 122-142; that stretch reads VGSPTVLFLAILKLWSIQVFI. The Virion surface segment spans residues 143–149; the sequence is QVLSYKH. The chain crosses the membrane as a helical span at residues 150–170; it reads VFLSAFVYFLHFLASVLHACA. The Intravirion segment spans residues 171 to 192; the sequence is CVTRFSPVWVVKAQDNSIPQDT. The chain crosses the membrane as a helical span at residues 193 to 215; that stretch reads FLWWVVFYLKPVVTNLYLGCLAL. Topologically, residues 216-245 are virion surface; sequence ETLVFSLSVFLALGNSFYFMVGDMVLGAVN. Residues 246-266 form a helical membrane-spanning segment; the sequence is LFLILPIFWYILTEVWLASFM. Position 267 (Arg-267) is a topological domain, intravirion. A helical transmembrane segment spans residues 268-288; sequence HNFGFYCGMFIASIILILPLV. Over 289–299 the chain is Virion surface; sequence RYEAVFVSAKL. A helical transmembrane segment spans residues 300 to 320; sequence HTTVAINVAIIPILCSVAMLI. Topologically, residues 321 to 405 are intravirion; it reads RICRIFKSMR…TTDSEEEIFP (85 aa). Positions 346 to 405 are disordered; that stretch reads LESEPRPRPSRTPSPGRNRRRSSTSSSSSRSTRRQRPVSTQALVSSVLPMTTDSEEEIFP. The segment covering 386 to 397 has biased composition (polar residues); sequence QALVSSVLPMTT.

The protein belongs to the herpesviridae glycoprotein M family. As to quaternary structure, interacts (via N-terminus) with gN (via N-terminus). The gM-gN heterodimer forms the gCII complex.

The protein resides in the virion membrane. It is found in the host Golgi apparatus. It localises to the host trans-Golgi network. Its subcellular location is the host endosome membrane. The protein localises to the host nucleus inner membrane. Functionally, envelope glycoprotein important for virion assembly and egress. Plays a role in the correct incorporation of gH-gL into virion membrane. Directs the glycoprotein N (gN) to the host trans-Golgi network. The chain is Envelope glycoprotein M from Epstein-Barr virus (strain GD1) (HHV-4).